The following is a 358-amino-acid chain: D-alanine--D-alanine ligase B (358 aa).

Residues 147–352 (KYVLENFKFK…YSALIDELIE (206 aa)) form the ATP-grasp domain. 179–234 (VEKLQYDVFIKPANSGSSVGITKAHNKEELLKGLEEAFIHDKNVLVEEAINAREIE) contacts ATP. Mg(2+) contacts are provided by aspartate 305, glutamate 319, and asparagine 321.

This sequence belongs to the D-alanine--D-alanine ligase family. The cofactor is Mg(2+). Mn(2+) serves as cofactor.

The protein resides in the cytoplasm. It carries out the reaction 2 D-alanine + ATP = D-alanyl-D-alanine + ADP + phosphate + H(+). The protein operates within cell wall biogenesis; peptidoglycan biosynthesis. Its function is as follows. Cell wall formation. This Clostridium tetani (strain Massachusetts / E88) protein is D-alanine--D-alanine ligase B.